The following is a 469-amino-acid chain: 3-isopropylmalate dehydratase large subunit (469 aa).

Residues Cys350, Cys410, and Cys413 each contribute to the [4Fe-4S] cluster site.

Belongs to the aconitase/IPM isomerase family. LeuC type 1 subfamily. In terms of assembly, heterodimer of LeuC and LeuD. [4Fe-4S] cluster serves as cofactor.

It carries out the reaction (2R,3S)-3-isopropylmalate = (2S)-2-isopropylmalate. It functions in the pathway amino-acid biosynthesis; L-leucine biosynthesis; L-leucine from 3-methyl-2-oxobutanoate: step 2/4. Catalyzes the isomerization between 2-isopropylmalate and 3-isopropylmalate, via the formation of 2-isopropylmaleate. In Allorhizobium ampelinum (strain ATCC BAA-846 / DSM 112012 / S4) (Agrobacterium vitis (strain S4)), this protein is 3-isopropylmalate dehydratase large subunit.